A 508-amino-acid polypeptide reads, in one-letter code: Photosystem II CP47 reaction center protein (508 aa).

The next 6 membrane-spanning stretches (helical) occupy residues 21 to 36, 101 to 115, 140 to 156, 203 to 218, 237 to 252, and 457 to 472; these read SVHI…WAGS, IVFS…IWHW, GIHL…FGAF, IAAG…FHLS, VLSS…AFVV, and SFAL…HGAR.

The protein belongs to the PsbB/PsbC family. PsbB subfamily. As to quaternary structure, PSII is composed of 1 copy each of membrane proteins PsbA, PsbB, PsbC, PsbD, PsbE, PsbF, PsbH, PsbI, PsbJ, PsbK, PsbL, PsbM, PsbT, PsbX, PsbY, PsbZ, Psb30/Ycf12, at least 3 peripheral proteins of the oxygen-evolving complex and a large number of cofactors. It forms dimeric complexes. Binds multiple chlorophylls. PSII binds additional chlorophylls, carotenoids and specific lipids. is required as a cofactor.

It is found in the plastid. The protein resides in the chloroplast thylakoid membrane. Functionally, one of the components of the core complex of photosystem II (PSII). It binds chlorophyll and helps catalyze the primary light-induced photochemical processes of PSII. PSII is a light-driven water:plastoquinone oxidoreductase, using light energy to abstract electrons from H(2)O, generating O(2) and a proton gradient subsequently used for ATP formation. The protein is Photosystem II CP47 reaction center protein of Illicium oligandrum (Star anise).